A 157-amino-acid polypeptide reads, in one-letter code: Phosphopantetheine adenylyltransferase (157 aa).

A substrate-binding site is contributed by Ser8. ATP-binding positions include 8–9 (SF) and His16. Residues Lys40, Thr72, and Arg86 each contribute to the substrate site. ATP contacts are provided by residues 87–89 (GLR), Glu97, and 122–128 (HSFLSSS).

This sequence belongs to the bacterial CoaD family. In terms of assembly, homohexamer. Requires Mg(2+) as cofactor.

Its subcellular location is the cytoplasm. It catalyses the reaction (R)-4'-phosphopantetheine + ATP + H(+) = 3'-dephospho-CoA + diphosphate. The protein operates within cofactor biosynthesis; coenzyme A biosynthesis; CoA from (R)-pantothenate: step 4/5. Its function is as follows. Reversibly transfers an adenylyl group from ATP to 4'-phosphopantetheine, yielding dephospho-CoA (dPCoA) and pyrophosphate. The sequence is that of Phosphopantetheine adenylyltransferase from Prochlorococcus marinus (strain MIT 9303).